A 186-amino-acid polypeptide reads, in one-letter code: GMP synthase [glutamine-hydrolyzing] subunit A (186 aa).

The Glutamine amidotransferase type-1 domain maps to 2–186 (SIVIINNFGQ…ENFNKICENY (185 aa)). Cys76 acts as the Nucleophile in catalysis. Residues His163 and Glu165 contribute to the active site.

As to quaternary structure, heterodimer composed of a glutamine amidotransferase subunit (A) and a GMP-binding subunit (B).

The enzyme catalyses XMP + L-glutamine + ATP + H2O = GMP + L-glutamate + AMP + diphosphate + 2 H(+). The protein operates within purine metabolism; GMP biosynthesis; GMP from XMP (L-Gln route): step 1/1. In terms of biological role, catalyzes the synthesis of GMP from XMP. The polypeptide is GMP synthase [glutamine-hydrolyzing] subunit A (Methanosphaera stadtmanae (strain ATCC 43021 / DSM 3091 / JCM 11832 / MCB-3)).